The chain runs to 130 residues: UPF0212 protein TSIB_1358 (130 aa).

It belongs to the UPF0212 family.

The chain is UPF0212 protein TSIB_1358 from Thermococcus sibiricus (strain DSM 12597 / MM 739).